The following is a 137-amino-acid chain: Large ribosomal subunit protein uL16c (137 aa).

It belongs to the universal ribosomal protein uL16 family. As to quaternary structure, part of the 50S ribosomal subunit.

Its subcellular location is the plastid. This is Large ribosomal subunit protein uL16c from Cuscuta reflexa (Southern Asian dodder).